A 299-amino-acid polypeptide reads, in one-letter code: Urease accessory protein UreD (299 aa).

This sequence belongs to the UreD family. As to quaternary structure, ureD, UreF and UreG form a complex that acts as a GTP-hydrolysis-dependent molecular chaperone, activating the urease apoprotein by helping to assemble the nickel containing metallocenter of UreC. The UreE protein probably delivers the nickel.

The protein resides in the cytoplasm. Required for maturation of urease via the functional incorporation of the urease nickel metallocenter. The chain is Urease accessory protein UreD from Natronomonas pharaonis (strain ATCC 35678 / DSM 2160 / CIP 103997 / JCM 8858 / NBRC 14720 / NCIMB 2260 / Gabara) (Halobacterium pharaonis).